The primary structure comprises 790 residues: Sorting nexin mvp1 (790 aa).

2 stretches are compositionally biased toward polar residues: residues 1 to 10 (MSLFGSSPPN) and 20 to 40 (KTAN…TRSG). 3 disordered regions span residues 1 to 62 (MSLF…RKQR), 215 to 342 (PNLS…SIHN), and 373 to 406 (AITG…HVRS). Pro residues predominate over residues 225 to 240 (PQRPVTPPKAPTPSPP). The segment covering 241-252 (KQQQQQQHQPPT) has biased composition (low complexity). Basic and acidic residues predominate over residues 269–283 (DLHKGHNHGPLEHST). Positions 297 to 319 (NDLNGNDAVSYSTSPEVTTTSSA) are enriched in polar residues. Low complexity-rich tracts occupy residues 324-339 (TTST…GPSS) and 386-400 (QSVS…PNRS). A PX domain is found at 411–525 (EENILVTLMP…IMFLTVPTEL (115 aa)). Residues Arg447, Ser449, Lys473, and Arg492 each contribute to the a 1,2-diacyl-sn-glycero-3-phospho-(1D-myo-inositol-3-phosphate) site.

It belongs to the sorting nexin family.

Its subcellular location is the cytoplasm. The protein resides in the membrane. Its function is as follows. Required for vacuolar protein sorting. This is Sorting nexin mvp1 (vsp-1) from Neurospora crassa (strain ATCC 24698 / 74-OR23-1A / CBS 708.71 / DSM 1257 / FGSC 987).